We begin with the raw amino-acid sequence, 363 residues long: MNKLALYCRPGFEKEVAAEITDQASHLGVFGFARVQDNSGYVIFECYQPDEADRLARDIPFNRLIFARQMMVISDLLEDLDPADRISPIVVAFEELSQQVNFAQSSELFVETADTNEAKELSTFCRKFTVPLRQALKKQGWLSAKASQKCGQFLHCFFVKPNCCYVGYSYVDNHSSHFMGIPRLKFPADAPSRSTLKLEEAILTFIPRKEENKRLNENMIGVDLGACPGGWTYQLVKRGLFVYAVDHGKMAASLHDTGRIEHCAEDGFKFQPPKRKKVDWLVCDMVEQPSRISLLIGKWLLNGWCRETIFNLKLPMKKRYQEVILCLENLAVMLAEQNLNFDIQAKHLYHDREEITVHIALKP.

Residues serine 194, 227 to 230, aspartate 246, aspartate 266, and aspartate 284 each bind S-adenosyl-L-methionine; that span reads CPGG. The Proton acceptor role is filled by lysine 313.

This sequence belongs to the class I-like SAM-binding methyltransferase superfamily. RNA methyltransferase RlmE family. RlmM subfamily. As to quaternary structure, monomer.

Its subcellular location is the cytoplasm. It catalyses the reaction cytidine(2498) in 23S rRNA + S-adenosyl-L-methionine = 2'-O-methylcytidine(2498) in 23S rRNA + S-adenosyl-L-homocysteine + H(+). Catalyzes the 2'-O-methylation at nucleotide C2498 in 23S rRNA. In Haemophilus influenzae (strain ATCC 51907 / DSM 11121 / KW20 / Rd), this protein is Ribosomal RNA large subunit methyltransferase M.